Here is a 247-residue protein sequence, read N- to C-terminus: Phycobilisome rod-core linker polypeptide CpcG2 (247 aa).

The region spanning 11-189 (SSQNQRVPGY…YWRDKLESER (179 aa)) is the PBS-linker domain. The disordered stretch occupies residues 223–247 (PDTTRNTTPTGIPISVNPSANFPVR).

Belongs to the phycobilisome linker protein family. In terms of assembly, part of the phycobilisome, a hemidiscoidal structure that is composed of two distinct substructures: a core complex and a number of rods radiating from the core.

It is found in the cellular thylakoid membrane. Rod-core linker protein required for attachment of phycocyanin to allophycocyanin in cores of phycobilisomes. In terms of biological role, linker polypeptides determine the state of aggregation and the location of the disk-shaped phycobiliprotein units within the phycobilisome and modulate their spectroscopic properties in order to mediate a directed and optimal energy transfer. The chain is Phycobilisome rod-core linker polypeptide CpcG2 from Nostoc sp. (strain PCC 7120 / SAG 25.82 / UTEX 2576).